A 149-amino-acid chain; its full sequence is Arginine repressor (149 aa).

This sequence belongs to the ArgR family.

Its subcellular location is the cytoplasm. It functions in the pathway amino-acid biosynthesis; L-arginine biosynthesis [regulation]. Functionally, regulates arginine biosynthesis genes. This is Arginine repressor from Chlorobaculum tepidum (strain ATCC 49652 / DSM 12025 / NBRC 103806 / TLS) (Chlorobium tepidum).